A 252-amino-acid polypeptide reads, in one-letter code: 2-succinyl-6-hydroxy-2,4-cyclohexadiene-1-carboxylate synthase (252 aa).

Belongs to the AB hydrolase superfamily. MenH family. Monomer.

The catalysed reaction is 5-enolpyruvoyl-6-hydroxy-2-succinyl-cyclohex-3-ene-1-carboxylate = (1R,6R)-6-hydroxy-2-succinyl-cyclohexa-2,4-diene-1-carboxylate + pyruvate. It functions in the pathway quinol/quinone metabolism; 1,4-dihydroxy-2-naphthoate biosynthesis; 1,4-dihydroxy-2-naphthoate from chorismate: step 3/7. It participates in quinol/quinone metabolism; menaquinone biosynthesis. Its function is as follows. Catalyzes a proton abstraction reaction that results in 2,5-elimination of pyruvate from 2-succinyl-5-enolpyruvyl-6-hydroxy-3-cyclohexene-1-carboxylate (SEPHCHC) and the formation of 2-succinyl-6-hydroxy-2,4-cyclohexadiene-1-carboxylate (SHCHC). In Escherichia coli O9:H4 (strain HS), this protein is 2-succinyl-6-hydroxy-2,4-cyclohexadiene-1-carboxylate synthase.